The sequence spans 174 residues: Photosystem II repair protein PSB27-H1, chloroplastic (174 aa).

The tract at residues 1 to 35 (MASASATATLLKPNLPPHKPTIIASSVSPPLPPPR) is disordered. The residue at position 94 (Thr94) is a Phosphothreonine. Residue Tyr132 is modified to Phosphotyrosine.

The protein belongs to the Psb27 family.

It localises to the plastid. It is found in the chloroplast thylakoid membrane. Probably involved in repair of photodamaged photosystem II (PSII). This Arabidopsis thaliana (Mouse-ear cress) protein is Photosystem II repair protein PSB27-H1, chloroplastic (PSB27-1).